The chain runs to 261 residues: Small ribosomal subunit protein uS2 (261 aa).

The segment at 224–261 is disordered; sequence GKQGQDDSEDVEKEMADKAAAENDDEESIEEVVEKSED. Residues 245–254 are compositionally biased toward acidic residues; the sequence is ENDDEESIEE.

The protein belongs to the universal ribosomal protein uS2 family.

This is Small ribosomal subunit protein uS2 from Lactobacillus gasseri (strain ATCC 33323 / DSM 20243 / BCRC 14619 / CIP 102991 / JCM 1131 / KCTC 3163 / NCIMB 11718 / NCTC 13722 / AM63).